Consider the following 540-residue polypeptide: CTP synthase (540 aa).

The segment at 1–264 (MQYIVVTGGV…ISYLSKLSGK (264 aa)) is amidoligase domain. Ser12 is a binding site for CTP. Ser12 is a binding site for UTP. 13–18 (GLGKGT) lines the ATP pocket. Tyr53 is a binding site for L-glutamine. Asp70 lines the ATP pocket. Asp70 and Glu140 together coordinate Mg(2+). Residues 147-149 (DIE), 185-190 (KTKPTQ), and Arg221 contribute to the CTP site. Residues 185–190 (KTKPTQ) and Arg221 contribute to the UTP site. The Glutamine amidotransferase type-1 domain maps to 294 to 527 (YVDLHDAYIS…VQQALIYKKN (234 aa)). Gly347 contacts L-glutamine. The active-site Nucleophile; for glutamine hydrolysis is Cys374. L-glutamine is bound by residues 375–378 (LGFQ), Glu398, and Arg455. Active-site residues include His500 and Glu502.

Belongs to the CTP synthase family. Homotetramer.

It catalyses the reaction UTP + L-glutamine + ATP + H2O = CTP + L-glutamate + ADP + phosphate + 2 H(+). The catalysed reaction is L-glutamine + H2O = L-glutamate + NH4(+). The enzyme catalyses UTP + NH4(+) + ATP = CTP + ADP + phosphate + 2 H(+). It participates in pyrimidine metabolism; CTP biosynthesis via de novo pathway; CTP from UDP: step 2/2. With respect to regulation, allosterically activated by GTP, when glutamine is the substrate; GTP has no effect on the reaction when ammonia is the substrate. The allosteric effector GTP functions by stabilizing the protein conformation that binds the tetrahedral intermediate(s) formed during glutamine hydrolysis. Inhibited by the product CTP, via allosteric rather than competitive inhibition. In terms of biological role, catalyzes the ATP-dependent amination of UTP to CTP with either L-glutamine or ammonia as the source of nitrogen. Regulates intracellular CTP levels through interactions with the four ribonucleotide triphosphates. The chain is CTP synthase from Thermoplasma volcanium (strain ATCC 51530 / DSM 4299 / JCM 9571 / NBRC 15438 / GSS1).